The primary structure comprises 488 residues: WD repeat-containing protein slp1 (488 aa).

2 disordered regions span residues 1 to 29 (MEIA…PNSP) and 74 to 93 (CGSP…FIPS). Residues 7–17 (SSTISPTFSTP) show a composition bias toward low complexity. WD repeat units lie at residues 178–215 (IDDY…VSAL), 219–258 (DEST…KLRT), 261–298 (GHQA…HQIG), 302–341 (GHSS…PKFT), 344–386 (NHNA…RVNT), 388–429 (DAGS…LTKQ), and 434–473 (AHDT…HVKR).

The protein belongs to the WD repeat CDC20/Fizzy family. In terms of assembly, interacts with cdc13, mad3 and mes1.

In terms of biological role, required for mad2-dependent spindle checkpoint activation. Promotes ubiquitin-dependent degradation of cdc13 by the anaphase promoting complex/cyclosome (APC/C). This chain is WD repeat-containing protein slp1 (slp1), found in Schizosaccharomyces pombe (strain 972 / ATCC 24843) (Fission yeast).